We begin with the raw amino-acid sequence, 149 residues long: Transcriptional repressor NrdR (149 aa).

Residues 3 to 34 (CPFCSENDTKVIDSRLVADGHQVRRRRQCLAC) fold into a zinc finger. The 91-residue stretch at 49–139 (PKVIKSNGNR…VYRSFEDIRE (91 aa)) folds into the ATP-cone domain.

The protein belongs to the NrdR family. It depends on Zn(2+) as a cofactor.

Negatively regulates transcription of bacterial ribonucleotide reductase nrd genes and operons by binding to NrdR-boxes. This chain is Transcriptional repressor NrdR, found in Vibrio vulnificus (strain YJ016).